Consider the following 219-residue polypeptide: Clathrin light chain (219 aa).

The disordered stretch occupies residues 32-136; sequence AEITGGSASA…KKEELRQQSK (105 aa). Residues 96-158 form an involved in binding clathrin heavy chain region; the sequence is PPPSREEPEK…SISKTKLASR (63 aa). Residues 99–136 show a composition bias toward basic and acidic residues; the sequence is SREEPEKIRKWREEQKQRLEEKDIEEERKKEELRQQSK.

It belongs to the clathrin light chain family. In terms of assembly, clathrin coats are formed from molecules containing 3 heavy chains and 3 light chains.

It localises to the cytoplasmic vesicle membrane. It is found in the membrane. The protein resides in the coated pit. Clathrin is the major protein of the polyhedral coat of coated pits and vesicles. This Drosophila melanogaster (Fruit fly) protein is Clathrin light chain (Clc).